Reading from the N-terminus, the 145-residue chain is Large ribosomal subunit protein uL11 (145 aa).

The protein belongs to the universal ribosomal protein uL11 family. In terms of assembly, part of the ribosomal stalk of the 50S ribosomal subunit. Interacts with L10 and the large rRNA to form the base of the stalk. L10 forms an elongated spine to which L12 dimers bind in a sequential fashion forming a multimeric L10(L12)X complex. One or more lysine residues are methylated.

Functionally, forms part of the ribosomal stalk which helps the ribosome interact with GTP-bound translation factors. This Persephonella marina (strain DSM 14350 / EX-H1) protein is Large ribosomal subunit protein uL11.